We begin with the raw amino-acid sequence, 198 residues long: Segregation and condensation protein B (198 aa).

The interval 168–198 is disordered; sequence KLADPATDEPDQNEMDLFFDRFNQSKEQEEE.

Belongs to the ScpB family. Homodimer. Homodimerization may be required to stabilize the binding of ScpA to the Smc head domains. Component of a cohesin-like complex composed of ScpA, ScpB and the Smc homodimer, in which ScpA and ScpB bind to the head domain of Smc. The presence of the three proteins is required for the association of the complex with DNA.

The protein resides in the cytoplasm. Its function is as follows. Participates in chromosomal partition during cell division. May act via the formation of a condensin-like complex containing Smc and ScpA that pull DNA away from mid-cell into both cell halves. The chain is Segregation and condensation protein B from Listeria monocytogenes serovar 1/2a (strain ATCC BAA-679 / EGD-e).